We begin with the raw amino-acid sequence, 41 residues long: Competence-stimulating peptide type 2 (41 aa).

The propeptide occupies 1–24; that stretch reads MKNTVKLEQFVALKEKDLQKIKGG.

Belongs to the ComC family.

Its subcellular location is the secreted. Its function is as follows. Acts as a pheromone, induces cells to develop competence for genetic transformation. This Streptococcus pneumoniae serotype 4 (strain ATCC BAA-334 / TIGR4) protein is Competence-stimulating peptide type 2 (comC2).